The sequence spans 478 residues: Lysine-rich nucleolar protein 1 (478 aa).

Residues Met-1–Val-231 are disordered. Residue Lys-7 forms a Glycyl lysine isopeptide (Lys-Gly) (interchain with G-Cter in SUMO2) linkage. Basic residues predominate over residues Lys-17–Val-27. Over residues Glu-33 to Asp-45 the composition is skewed to polar residues. Phosphoserine occurs at positions 51 and 59. Positions Arg-54 to Asp-63 are enriched in polar residues. Composition is skewed to basic residues over residues Ser-73 to Cys-82 and Glu-120 to Leu-129. Lys-140 participates in a covalent cross-link: Glycyl lysine isopeptide (Lys-Gly) (interchain with G-Cter in SUMO2). Position 142 is a phosphoserine (Ser-142). A compositionally biased stretch (basic and acidic residues) spans Pro-143–Lys-153. Basic residues-rich tracts occupy residues Ala-154–Lys-165 and Gln-204–Thr-222. A Glycyl lysine isopeptide (Lys-Gly) (interchain with G-Cter in SUMO1); alternate cross-link involves residue Lys-250. Lys-250 participates in a covalent cross-link: Glycyl lysine isopeptide (Lys-Gly) (interchain with G-Cter in SUMO2); alternate. Residues Pro-258–Thr-314 form a disordered region. Ser-261 carries the phosphoserine modification. Residues Pro-265–Lys-274 are compositionally biased toward basic residues. Residues Lys-275 and Lys-287 each participate in a glycyl lysine isopeptide (Lys-Gly) (interchain with G-Cter in SUMO2) cross-link. Basic residues predominate over residues Val-286–Lys-296. The span at Glu-297 to Glu-307 shows a compositional bias: basic and acidic residues. Lys-309 is covalently cross-linked (Glycyl lysine isopeptide (Lys-Gly) (interchain with G-Cter in SUMO2)). The interval Glu-310–Asp-478 is interaction with ZNF106. Residue Ser-312 is modified to Phosphoserine. Thr-314 is modified (phosphothreonine). Lys-323 is covalently cross-linked (Glycyl lysine isopeptide (Lys-Gly) (interchain with G-Cter in SUMO2)). Residues Gln-340 to Lys-357 are compositionally biased toward basic and acidic residues. Residues Gln-340–Gln-378 form a disordered region. Glycyl lysine isopeptide (Lys-Gly) (interchain with G-Cter in SUMO2) cross-links involve residues Lys-373, Lys-393, Lys-395, Lys-427, and Lys-462.

As to quaternary structure, interacts with ZNF106. Expressed in testis.

The protein localises to the nucleus. The protein resides in the nucleolus. This Mus musculus (Mouse) protein is Lysine-rich nucleolar protein 1 (Knop1).